We begin with the raw amino-acid sequence, 113 residues long: Replication initiation control protein YabA (113 aa).

His-86, Cys-88, Cys-102, and Cys-105 together coordinate Zn(2+).

Belongs to the YabA family. Homotetramer. Interacts with both DnaA and DnaN, acting as a bridge between these two proteins. The cofactor is Zn(2+).

Its subcellular location is the cytoplasm. The protein resides in the nucleoid. Its function is as follows. Involved in control of chromosome replication initiation. Inhibits the cooperative binding of DnaA to the oriC region, thus negatively regulating initiation of chromosome replication. Inhibits the ability of DnaA-ATP to form a helix on DNA; does not disassemble preformed DnaA-DNA helices. Decreases the residence time of DnaA on the chromosome at its binding sites (oriC, replication forks and promoter-binding sites). Tethers DnaA to the replication machinery via the DNA polymerase beta sliding clamp subunit (dnaN). Associates with oriC and other DnaA targets on the chromosome in a DnaA-dependent manner. The chain is Replication initiation control protein YabA from Pediococcus pentosaceus (strain ATCC 25745 / CCUG 21536 / LMG 10740 / 183-1w).